Reading from the N-terminus, the 355-residue chain is Tetraacyldisaccharide 4'-kinase (355 aa).

Ser-48 to Thr-55 contacts ATP.

The protein belongs to the LpxK family.

It carries out the reaction a lipid A disaccharide + ATP = a lipid IVA + ADP + H(+). Its pathway is glycolipid biosynthesis; lipid IV(A) biosynthesis; lipid IV(A) from (3R)-3-hydroxytetradecanoyl-[acyl-carrier-protein] and UDP-N-acetyl-alpha-D-glucosamine: step 6/6. Its function is as follows. Transfers the gamma-phosphate of ATP to the 4'-position of a tetraacyldisaccharide 1-phosphate intermediate (termed DS-1-P) to form tetraacyldisaccharide 1,4'-bis-phosphate (lipid IVA). The chain is Tetraacyldisaccharide 4'-kinase from Pelodictyon phaeoclathratiforme (strain DSM 5477 / BU-1).